Here is a 486-residue protein sequence, read N- to C-terminus: UDP-N-acetylmuramoyl-L-alanyl-D-glutamate--2,6-diaminopimelate ligase (486 aa).

A UDP-N-acetyl-alpha-D-muramoyl-L-alanyl-D-glutamate-binding site is contributed by serine 26. 104 to 110 (GTNGKTS) is a binding site for ATP. UDP-N-acetyl-alpha-D-muramoyl-L-alanyl-D-glutamate is bound by residues 152 to 153 (TT), serine 179, glutamine 185, and arginine 187. Lysine 219 is subject to N6-carboxylysine. Meso-2,6-diaminopimelate contacts are provided by residues arginine 383, 407–410 (DNPR), glycine 455, and glutamate 459. The Meso-diaminopimelate recognition motif motif lies at 407–410 (DNPR).

Belongs to the MurCDEF family. MurE subfamily. The cofactor is Mg(2+). Post-translationally, carboxylation is probably crucial for Mg(2+) binding and, consequently, for the gamma-phosphate positioning of ATP.

The protein resides in the cytoplasm. The catalysed reaction is UDP-N-acetyl-alpha-D-muramoyl-L-alanyl-D-glutamate + meso-2,6-diaminopimelate + ATP = UDP-N-acetyl-alpha-D-muramoyl-L-alanyl-gamma-D-glutamyl-meso-2,6-diaminopimelate + ADP + phosphate + H(+). It functions in the pathway cell wall biogenesis; peptidoglycan biosynthesis. Its function is as follows. Catalyzes the addition of meso-diaminopimelic acid to the nucleotide precursor UDP-N-acetylmuramoyl-L-alanyl-D-glutamate (UMAG) in the biosynthesis of bacterial cell-wall peptidoglycan. The chain is UDP-N-acetylmuramoyl-L-alanyl-D-glutamate--2,6-diaminopimelate ligase from Caulobacter vibrioides (strain ATCC 19089 / CIP 103742 / CB 15) (Caulobacter crescentus).